A 113-amino-acid polypeptide reads, in one-letter code: Gas vesicle protein I2 (113 aa).

The interval 1–93 is disordered; that stretch reads MTPTNRHTHG…TVPEQPTHAT (93 aa). Low complexity predominate over residues 11–22; it reads QNAQHARRNAQQ. The segment covering 52–63 has biased composition (polar residues); the sequence is EQPTSDTTNPAA. Positions 69–81 are enriched in low complexity; it reads AQRTNAQNAARNA. A compositionally biased stretch (polar residues) spans 82–93; it reads HSTVPEQPTHAT.

Belongs to the gas vesicle GvpI family. In terms of assembly, gvpF to GvpM interact with each other in vitro, and may form multi-subunit complex(es). Interacts with GvpC and GvpO.

The protein resides in the gas vesicle. Its function is as follows. Proteins GvpF to GvpM might be involved in nucleating gas vesicle formation. A minor component of the gas vesicle. Gas vesicles are hollow, gas filled proteinaceous nanostructures found in several microbial planktonic microorganisms. They allow positioning of halobacteria at the optimal depth for growth in the poorly aerated, shallow brine pools of their habitat. Expression of 2 c-vac DNA fragments containing 2 divergently transcribed regions (gvpE-gvpF-gvpG-gvpH-gvpI-gvpJ-gvpK-gvpL-gvpM and gvpA-gvpC-gvpN-gvpO) allows H.volcanii to produce gas vesicles. This is Gas vesicle protein I2 from Halobacterium salinarum (strain ATCC 700922 / JCM 11081 / NRC-1) (Halobacterium halobium).